A 513-amino-acid polypeptide reads, in one-letter code: MTRVINLDGESLTIEDVIAIARQGVACRIDDSAIEAVNASRKIVDDIVSEKRVVYGVTTGFGSLCNVSISPEDTVQLQENLIRTHASGFGDPLPEDAVRAIMLIRINSLVKGYSGIRLSTIEKLLELLNKGVHPYIPEKGSLGASGDLAPLAHMVLPMLGLGKAYYKGELLSGQEALDKAGIDKISLAAKEGLALINGTTVLTAIGALATYDAIQLLKLSDLAGALSLEVHNGITSPFEENLHTIRPQSGQLATARNIRNLHEGSQNTTVATQSRVQDPYTLRCIPQIHGASKDSIAYVKSKVDIEINSVTDNPIICKDGHVISGGNFHGEPMAQPFDFLGIAISEIGNVSERRVERLVNSQLSKLPSFLVKYPGLNSGFMITQYACASLASENKVLAHPASVDSIPSCENQEDFVSMGTTAARKAFEILKNSHRIVATEIMAACQALDLKSENHELGKGTKVAYDLFRKEVNFIEHDKHIEIYDELNKASTVIEDPSFLEAVEQAVELSIQF.

The 5-imidazolinone (Ala-Gly) cross-link spans 144-146 (ASG). S145 is subject to 2,3-didehydroalanine (Ser).

Belongs to the PAL/histidase family. Post-translationally, contains an active site 4-methylidene-imidazol-5-one (MIO), which is formed autocatalytically by cyclization and dehydration of residues Ala-Ser-Gly.

It is found in the cytoplasm. It catalyses the reaction L-histidine = trans-urocanate + NH4(+). Its pathway is amino-acid degradation; L-histidine degradation into L-glutamate; N-formimidoyl-L-glutamate from L-histidine: step 1/3. The protein is Histidine ammonia-lyase of Streptococcus pyogenes serotype M3 (strain ATCC BAA-595 / MGAS315).